Reading from the N-terminus, the 474-residue chain is ATP synthase subunit beta (474 aa).

151–158 (GGAGVGKT) contributes to the ATP binding site.

This sequence belongs to the ATPase alpha/beta chains family. As to quaternary structure, F-type ATPases have 2 components, CF(1) - the catalytic core - and CF(0) - the membrane proton channel. CF(1) has five subunits: alpha(3), beta(3), gamma(1), delta(1), epsilon(1). CF(0) has three main subunits: a(1), b(2) and c(9-12). The alpha and beta chains form an alternating ring which encloses part of the gamma chain. CF(1) is attached to CF(0) by a central stalk formed by the gamma and epsilon chains, while a peripheral stalk is formed by the delta and b chains.

Its subcellular location is the cell inner membrane. It catalyses the reaction ATP + H2O + 4 H(+)(in) = ADP + phosphate + 5 H(+)(out). Its function is as follows. Produces ATP from ADP in the presence of a proton gradient across the membrane. The catalytic sites are hosted primarily by the beta subunits. In Ruegeria sp. (strain TM1040) (Silicibacter sp.), this protein is ATP synthase subunit beta.